The sequence spans 122 residues: Large ribosomal subunit protein uL14c (122 aa).

The protein belongs to the universal ribosomal protein uL14 family. As to quaternary structure, part of the 50S ribosomal subunit.

The protein localises to the plastid. It is found in the chloroplast. Binds to 23S rRNA. The protein is Large ribosomal subunit protein uL14c of Tupiella akineta (Green alga).